The chain runs to 1226 residues: uncharacterized protein (1226 aa).

This sequence belongs to the Mg-chelatase subunit H family.

This is an uncharacterized protein from Methanocaldococcus jannaschii (strain ATCC 43067 / DSM 2661 / JAL-1 / JCM 10045 / NBRC 100440) (Methanococcus jannaschii).